Here is a 103-residue protein sequence, read N- to C-terminus: Pyrimidine/purine nucleoside phosphorylase (103 aa).

This sequence belongs to the nucleoside phosphorylase PpnP family.

The catalysed reaction is a purine D-ribonucleoside + phosphate = a purine nucleobase + alpha-D-ribose 1-phosphate. It carries out the reaction adenosine + phosphate = alpha-D-ribose 1-phosphate + adenine. The enzyme catalyses cytidine + phosphate = cytosine + alpha-D-ribose 1-phosphate. It catalyses the reaction guanosine + phosphate = alpha-D-ribose 1-phosphate + guanine. The catalysed reaction is inosine + phosphate = alpha-D-ribose 1-phosphate + hypoxanthine. It carries out the reaction thymidine + phosphate = 2-deoxy-alpha-D-ribose 1-phosphate + thymine. The enzyme catalyses uridine + phosphate = alpha-D-ribose 1-phosphate + uracil. It catalyses the reaction xanthosine + phosphate = alpha-D-ribose 1-phosphate + xanthine. Its function is as follows. Catalyzes the phosphorolysis of diverse nucleosides, yielding D-ribose 1-phosphate and the respective free bases. Can use uridine, adenosine, guanosine, cytidine, thymidine, inosine and xanthosine as substrates. Also catalyzes the reverse reactions. This chain is Pyrimidine/purine nucleoside phosphorylase, found in Shewanella denitrificans (strain OS217 / ATCC BAA-1090 / DSM 15013).